The chain runs to 628 residues: tRNA uridine 5-carboxymethylaminomethyl modification enzyme MnmG (628 aa).

Gly13–Gly18 provides a ligand contact to FAD. Gly281–Phe295 contacts NAD(+).

It belongs to the MnmG family. Homodimer. Heterotetramer of two MnmE and two MnmG subunits. FAD serves as cofactor.

It is found in the cytoplasm. In terms of biological role, NAD-binding protein involved in the addition of a carboxymethylaminomethyl (cmnm) group at the wobble position (U34) of certain tRNAs, forming tRNA-cmnm(5)s(2)U34. This chain is tRNA uridine 5-carboxymethylaminomethyl modification enzyme MnmG, found in Treponema denticola (strain ATCC 35405 / DSM 14222 / CIP 103919 / JCM 8153 / KCTC 15104).